A 446-amino-acid polypeptide reads, in one-letter code: Signal recognition particle protein (446 aa).

Residues 108-115, 191-195, and 249-252 each bind GTP; these read GLQGAGKT, DTAGR, and TKLD.

The protein belongs to the GTP-binding SRP family. SRP54 subfamily. Part of the signal recognition particle protein translocation system, which is composed of SRP and FtsY. Interacts with a small cytoplasmic RNA (sc-RNA).

The protein localises to the cytoplasm. It carries out the reaction GTP + H2O = GDP + phosphate + H(+). Involved in targeting and insertion of nascent membrane proteins into the cytoplasmic membrane. Binds to the hydrophobic signal sequence of the ribosome-nascent chain (RNC) as it emerges from the ribosomes. The SRP-RNC complex is then targeted to the cytoplasmic membrane where it interacts with the SRP receptor FtsY. Interaction with FtsY leads to the transfer of the RNC complex to the Sec translocase for insertion into the membrane, the hydrolysis of GTP by both Ffh and FtsY, and the dissociation of the SRP-FtsY complex into the individual components. This chain is Signal recognition particle protein, found in Bacillus subtilis (strain 168).